A 318-amino-acid polypeptide reads, in one-letter code: Aspartate carbamoyltransferase catalytic subunit (318 aa).

Carbamoyl phosphate-binding residues include Arg-64 and Thr-65. Residue Lys-92 coordinates L-aspartate. The carbamoyl phosphate site is built by Arg-114, His-142, and Gln-145. 2 residues coordinate L-aspartate: Arg-176 and Arg-230. Positions 271 and 272 each coordinate carbamoyl phosphate.

Belongs to the aspartate/ornithine carbamoyltransferase superfamily. ATCase family. As to quaternary structure, heterododecamer (2C3:3R2) of six catalytic PyrB chains organized as two trimers (C3), and six regulatory PyrI chains organized as three dimers (R2).

It carries out the reaction carbamoyl phosphate + L-aspartate = N-carbamoyl-L-aspartate + phosphate + H(+). It functions in the pathway pyrimidine metabolism; UMP biosynthesis via de novo pathway; (S)-dihydroorotate from bicarbonate: step 2/3. In terms of biological role, catalyzes the condensation of carbamoyl phosphate and aspartate to form carbamoyl aspartate and inorganic phosphate, the committed step in the de novo pyrimidine nucleotide biosynthesis pathway. The chain is Aspartate carbamoyltransferase catalytic subunit from Desulfovibrio desulfuricans (strain ATCC 27774 / DSM 6949 / MB).